A 184-amino-acid polypeptide reads, in one-letter code: Translation initiation factor IF-3 (184 aa).

It belongs to the IF-3 family. Monomer.

The protein localises to the cytoplasm. IF-3 binds to the 30S ribosomal subunit and shifts the equilibrium between 70S ribosomes and their 50S and 30S subunits in favor of the free subunits, thus enhancing the availability of 30S subunits on which protein synthesis initiation begins. In Hamiltonella defensa subsp. Acyrthosiphon pisum (strain 5AT), this protein is Translation initiation factor IF-3.